The primary structure comprises 251 residues: Ubiquinone/menaquinone biosynthesis C-methyltransferase UbiE (251 aa).

S-adenosyl-L-methionine-binding positions include T74, D95, 123–124 (NA), and S140.

The protein belongs to the class I-like SAM-binding methyltransferase superfamily. MenG/UbiE family.

It carries out the reaction a 2-demethylmenaquinol + S-adenosyl-L-methionine = a menaquinol + S-adenosyl-L-homocysteine + H(+). The catalysed reaction is a 2-methoxy-6-(all-trans-polyprenyl)benzene-1,4-diol + S-adenosyl-L-methionine = a 5-methoxy-2-methyl-3-(all-trans-polyprenyl)benzene-1,4-diol + S-adenosyl-L-homocysteine + H(+). It functions in the pathway quinol/quinone metabolism; menaquinone biosynthesis; menaquinol from 1,4-dihydroxy-2-naphthoate: step 2/2. It participates in cofactor biosynthesis; ubiquinone biosynthesis. In terms of biological role, methyltransferase required for the conversion of demethylmenaquinol (DMKH2) to menaquinol (MKH2) and the conversion of 2-polyprenyl-6-methoxy-1,4-benzoquinol (DDMQH2) to 2-polyprenyl-3-methyl-6-methoxy-1,4-benzoquinol (DMQH2). The protein is Ubiquinone/menaquinone biosynthesis C-methyltransferase UbiE of Pectobacterium atrosepticum (strain SCRI 1043 / ATCC BAA-672) (Erwinia carotovora subsp. atroseptica).